The primary structure comprises 159 residues: Transcription elongation factor GreA (159 aa).

Positions 14–76 (IKKLENELEY…QLENMLKNAS (63 aa)) form a coiled coil.

The protein belongs to the GreA/GreB family.

Its function is as follows. Necessary for efficient RNA polymerase transcription elongation past template-encoded arresting sites. The arresting sites in DNA have the property of trapping a certain fraction of elongating RNA polymerases that pass through, resulting in locked ternary complexes. Cleavage of the nascent transcript by cleavage factors such as GreA or GreB allows the resumption of elongation from the new 3'terminus. GreA releases sequences of 2 to 3 nucleotides. The sequence is that of Transcription elongation factor GreA from Clostridium kluyveri (strain NBRC 12016).